The chain runs to 921 residues: Levanase (921 aa).

Residues 1–23 (MMKWFAKLILSLSLAVVMAASSA) form the signal peptide. Residues 409-412 (SASD), Gln428, 460-461 (WS), 539-540 (RD), Glu591, and Trp679 each bind substrate. The active site involves Asp412.

It belongs to the glycosyl hydrolase 32 family.

Its subcellular location is the secreted. It catalyses the reaction Random hydrolysis of (2-&gt;6)-beta-D-fructofuranosidic linkages in (2-&gt;6)-beta-D-fructans (levans) containing more than 3 fructose units.. With respect to regulation, is completely inhibited by low concentrations of heavy metal ions, while Ca(2+) and Mg(2+) or chelating agents such as EDTA neither inhibit nor activate the enzyme to any significant extent. Its function is as follows. Catalyzes the hydrolysis of levan with endo-type specificity. The products of levan hydrolysis are a mixture of fructose and a series of fructooligosaccharides up to 12-mer, with levantriose being the major oligosaccharide obtained. Is not active towards sucrose. The polypeptide is Levanase (Bacillus sp. (strain L7)).